The following is a 281-amino-acid chain: Putative phosphatase/phosphodiesterase MPN_349 (281 aa).

Fe cation is bound by residues Asp-12, Glu-43, Asn-44, and Asn-71. His-72 acts as the Proton donor in catalysis. Fe cation-binding residues include His-158, His-183, and His-185.

It belongs to the YmdB-like family. The cofactor is Fe(3+).

In Mycoplasma pneumoniae (strain ATCC 29342 / M129 / Subtype 1) (Mycoplasmoides pneumoniae), this protein is Putative phosphatase/phosphodiesterase MPN_349.